A 258-amino-acid chain; its full sequence is Ribosomal RNA small subunit methyltransferase A (258 aa).

S-adenosyl-L-methionine contacts are provided by histidine 13, leucine 15, glycine 41, aspartate 63, aspartate 87, and asparagine 106.

The protein belongs to the class I-like SAM-binding methyltransferase superfamily. rRNA adenine N(6)-methyltransferase family. RsmA subfamily.

The protein localises to the cytoplasm. It carries out the reaction adenosine(1518)/adenosine(1519) in 16S rRNA + 4 S-adenosyl-L-methionine = N(6)-dimethyladenosine(1518)/N(6)-dimethyladenosine(1519) in 16S rRNA + 4 S-adenosyl-L-homocysteine + 4 H(+). Specifically dimethylates two adjacent adenosines (A1518 and A1519) in the loop of a conserved hairpin near the 3'-end of 16S rRNA in the 30S particle. May play a critical role in biogenesis of 30S subunits. The polypeptide is Ribosomal RNA small subunit methyltransferase A (Cytophaga hutchinsonii (strain ATCC 33406 / DSM 1761 / CIP 103989 / NBRC 15051 / NCIMB 9469 / D465)).